Consider the following 111-residue polypeptide: Small ribosomal subunit protein uS10 (111 aa).

The protein belongs to the universal ribosomal protein uS10 family. In terms of assembly, part of the 30S ribosomal subunit.

Its function is as follows. Involved in the binding of tRNA to the ribosomes. In Protochlamydia amoebophila (strain UWE25), this protein is Small ribosomal subunit protein uS10.